The sequence spans 1212 residues: DNA-directed RNA polymerase subunit beta (1212 aa).

The segment covering 1176 to 1195 (QQEKKKLAEEAAKKDDKSAE) has biased composition (basic and acidic residues). Positions 1176–1212 (QQEKKKLAEEAAKKDDKSAEPVDQSDSSTSSDDKVSK) are disordered.

It belongs to the RNA polymerase beta chain family. The RNAP catalytic core consists of 2 alpha, 1 beta, 1 beta' and 1 omega subunit. When a sigma factor is associated with the core the holoenzyme is formed, which can initiate transcription.

The enzyme catalyses RNA(n) + a ribonucleoside 5'-triphosphate = RNA(n+1) + diphosphate. DNA-dependent RNA polymerase catalyzes the transcription of DNA into RNA using the four ribonucleoside triphosphates as substrates. The polypeptide is DNA-directed RNA polymerase subunit beta (Lactobacillus gasseri (strain ATCC 33323 / DSM 20243 / BCRC 14619 / CIP 102991 / JCM 1131 / KCTC 3163 / NCIMB 11718 / NCTC 13722 / AM63)).